The chain runs to 190 residues: Iron-sulfur assembly protein 1 (190 aa).

Positions 49-71 are disordered; that stretch reads PSLKPSAAGSGSTAPKPVTEREI. Residues Cys116, Cys180, and Cys182 each contribute to the Fe cation site.

This sequence belongs to the HesB/IscA family.

The protein resides in the mitochondrion matrix. In terms of biological role, involved in the assembly of mitochondrial and cytoplasmic iron-sulfur proteins. Probably involved in the binding of an intermediate of Fe/S cluster assembly. In Schizosaccharomyces pombe (strain 972 / ATCC 24843) (Fission yeast), this protein is Iron-sulfur assembly protein 1 (isa1).